Here is a 1193-residue protein sequence, read N- to C-terminus: Kinesin-related protein 3 (1193 aa).

Residues 3–329 (SIRVVCRFRP…LRFGSRAKNI (327 aa)) enclose the Kinesin motor domain. Position 85–92 (85–92 (GQTGSGKT)) interacts with ATP. 7 disordered regions span residues 377 to 429 (KSSG…SSNV), 573 to 600 (SSIA…KHAD), 611 to 630 (LLQR…TATS), 638 to 665 (ISES…ATSS), 973 to 1016 (GGGG…SANL), 1032 to 1114 (KAEP…PVKI), and 1127 to 1193 (FKKK…QQKD). The segment covering 405–429 (SSNLSNSVNSTSNLNTSSNTSSSNV) has biased composition (low complexity). The stretch at 450–962 (ELIKVLQEKC…SQVGVDAQNT (513 aa)) forms a coiled coil. Polar residues-rich tracts occupy residues 573-585 (SSIA…TPKS) and 614-630 (RTPS…TATS). Low complexity-rich tracts occupy residues 643 to 665 (NIGS…ATSS) and 985 to 1006 (HSSS…NNNH). Over residues 1007–1016 (TTPTPLSANL) the composition is skewed to polar residues. 3 stretches are compositionally biased toward low complexity: residues 1044-1078 (NTSI…IGNS), 1086-1109 (NNNS…LNGN), and 1132-1149 (PSST…QSPQ). 2 stretches are compositionally biased toward polar residues: residues 1150 to 1165 (TPSH…ISPN) and 1174 to 1193 (FSYT…QQKD).

Belongs to the TRAFAC class myosin-kinesin ATPase superfamily. Kinesin family. Kinesin subfamily. As to quaternary structure, dimer.

It is found in the cytoplasm. It localises to the cytoskeleton. Its function is as follows. Microtubule-associated force-producing protein that plays a role in organelle transport. Its motor activity is directed toward the microtubule's plus end. The maximal velocity in an inverted motility assay (moving microtubules on fixed motors) was 1.96 um/s. The chain is Kinesin-related protein 3 (kif3) from Dictyostelium discoideum (Social amoeba).